The chain runs to 171 residues: 3-hydroxydecanoyl-[acyl-carrier-protein] dehydratase (171 aa).

The active site involves H70.

It belongs to the thioester dehydratase family. FabA subfamily. As to quaternary structure, homodimer.

The protein localises to the cytoplasm. It catalyses the reaction a (3R)-hydroxyacyl-[ACP] = a (2E)-enoyl-[ACP] + H2O. It carries out the reaction (3R)-hydroxydecanoyl-[ACP] = (2E)-decenoyl-[ACP] + H2O. The enzyme catalyses (2E)-decenoyl-[ACP] = (3Z)-decenoyl-[ACP]. Its pathway is lipid metabolism; fatty acid biosynthesis. Its function is as follows. Necessary for the introduction of cis unsaturation into fatty acids. Catalyzes the dehydration of (3R)-3-hydroxydecanoyl-ACP to E-(2)-decenoyl-ACP and then its isomerization to Z-(3)-decenoyl-ACP. Can catalyze the dehydratase reaction for beta-hydroxyacyl-ACPs with saturated chain lengths up to 16:0, being most active on intermediate chain length. This Pseudomonas fluorescens (strain ATCC BAA-477 / NRRL B-23932 / Pf-5) protein is 3-hydroxydecanoyl-[acyl-carrier-protein] dehydratase.